A 77-amino-acid polypeptide reads, in one-letter code: Acyl carrier protein (77 aa).

One can recognise a Carrier domain in the interval 1 to 76 (MSVEQRVKEI…DVLDYIKSKQ (76 aa)). Residue Ser-36 is modified to O-(pantetheine 4'-phosphoryl)serine.

The protein belongs to the acyl carrier protein (ACP) family. In terms of processing, 4'-phosphopantetheine is transferred from CoA to a specific serine of apo-ACP by AcpS. This modification is essential for activity because fatty acids are bound in thioester linkage to the sulfhydryl of the prosthetic group.

The protein localises to the cytoplasm. It functions in the pathway lipid metabolism; fatty acid biosynthesis. Carrier of the growing fatty acid chain in fatty acid biosynthesis. The chain is Acyl carrier protein from Sulfurihydrogenibium sp. (strain YO3AOP1).